The chain runs to 200 residues: Ribonuclease HII (200 aa).

An RNase H type-2 domain is found at 6–200; it reads ESIAGVDEVG…KLFAVHGSLT (195 aa). A divalent metal cation-binding residues include Asp12, Glu13, and Asp108.

This sequence belongs to the RNase HII family. The cofactor is Mn(2+). Mg(2+) is required as a cofactor.

It localises to the cytoplasm. The catalysed reaction is Endonucleolytic cleavage to 5'-phosphomonoester.. In terms of biological role, endonuclease that specifically degrades the RNA of RNA-DNA hybrids. This is Ribonuclease HII from Prochlorococcus marinus (strain MIT 9303).